A 269-amino-acid polypeptide reads, in one-letter code: Small ribosomal subunit protein uS2 (269 aa).

It belongs to the universal ribosomal protein uS2 family.

This chain is Small ribosomal subunit protein uS2 (rpsB), found in Synechocystis sp. (strain ATCC 27184 / PCC 6803 / Kazusa).